The sequence spans 77 residues: Acyl carrier protein (77 aa).

The region spanning 2 to 77 (ADALERVTKI…DAVNYINSKQ (76 aa)) is the Carrier domain. The residue at position 37 (serine 37) is an O-(pantetheine 4'-phosphoryl)serine.

Belongs to the acyl carrier protein (ACP) family. In terms of processing, 4'-phosphopantetheine is transferred from CoA to a specific serine of apo-ACP by AcpS. This modification is essential for activity because fatty acids are bound in thioester linkage to the sulfhydryl of the prosthetic group.

Its subcellular location is the cytoplasm. It participates in lipid metabolism; fatty acid biosynthesis. In terms of biological role, carrier of the growing fatty acid chain in fatty acid biosynthesis. This Bacillus licheniformis (strain ATCC 14580 / DSM 13 / JCM 2505 / CCUG 7422 / NBRC 12200 / NCIMB 9375 / NCTC 10341 / NRRL NRS-1264 / Gibson 46) protein is Acyl carrier protein.